Reading from the N-terminus, the 1770-residue chain is Transposon Ty2-F Gag-Pol polyprotein (1770 aa).

Composition is skewed to polar residues over residues 1-11 (MESQQLHQNPH), 19-39 (ASVT…SASN), and 49-60 (KVNSQQETTPGT). Disordered stretches follow at residues 1-86 (MESQ…GQYQ) and 359-453 (QHSE…LPDH). Positions 295–397 (ENNINVSDRL…SSKPRAAKAH (103 aa)) are RNA-binding. Positions 369 to 381 (TSPNTTNTKVTTR) are enriched in low complexity. 2 stretches are compositionally biased toward polar residues: residues 399–408 (IATSSKFSRV) and 415–435 (ESTV…GQQQ). Residue aspartate 457 is the For protease activity; shared with dimeric partner of the active site. The tract at residues 579–636 (NVNKSKSVNKYPYPLIHRMLGHANFRSIQKSLKKNAVTYLKESDIEWSNASTYQCPDC) is integrase-type zinc finger-like. An Integrase catalytic domain is found at 656-831 (ESYEPFQYLH…AGLDITTILP (176 aa)). Positions 667 and 732 each coordinate Mg(2+). 4 disordered regions span residues 1004 to 1034 (MGGT…STNE), 1059 to 1135 (TEEP…KSSK), 1146 to 1165 (LPLP…VSKD), and 1170 to 1205 (HSRQ…TEIE). 2 stretches are compositionally biased toward polar residues: residues 1009–1034 (ESDT…STNE) and 1065–1082 (QRNS…STPS). Residues 1151–1165 (LTHKSPTDTSDVSKD) show a composition bias toward basic and acidic residues. A Bipartite nuclear localization signal motif is present at residues 1193–1227 (KKRSLEDNETEIEVSRDTWNNKNMRSLEPPRSKKR). One can recognise a Reverse transcriptase Ty1/copia-type domain in the interval 1353–1491 (NDYYITQLDI…DILGLEIKYQ (139 aa)). Mg(2+)-binding residues include aspartate 1361, aspartate 1442, aspartate 1443, aspartate 1625, glutamate 1667, and aspartate 1700. The region spanning 1625-1767 (DASYGNQPYY…IKTFKLLTNK (143 aa)) is the RNase H Ty1/copia-type domain.

As to quaternary structure, the capsid protein forms a homotrimer, from which the VLPs are assembled. The protease is a homodimer, whose active site consists of two apposed aspartic acid residues. In terms of processing, initially, virus-like particles (VLPs) are composed of the structural unprocessed proteins Gag and Gag-Pol, and also contain the host initiator methionine tRNA (tRNA(i)-Met) which serves as a primer for minus-strand DNA synthesis, and a dimer of genomic Ty RNA. Processing of the polyproteins occurs within the particle and proceeds by an ordered pathway, called maturation. First, the protease (PR) is released by autocatalytic cleavage of the Gag-Pol polyprotein, and this cleavage is a prerequisite for subsequent processing at the remaining sites to release the mature structural and catalytic proteins. Maturation takes place prior to the RT reaction and is required to produce transposition-competent VLPs.

It is found in the cytoplasm. It localises to the nucleus. The catalysed reaction is DNA(n) + a 2'-deoxyribonucleoside 5'-triphosphate = DNA(n+1) + diphosphate. It carries out the reaction Endonucleolytic cleavage to 5'-phosphomonoester.. Functionally, capsid protein (CA) is the structural component of the virus-like particle (VLP), forming the shell that encapsulates the retrotransposons dimeric RNA genome. The particles are assembled from trimer-clustered units and there are holes in the capsid shells that allow for the diffusion of macromolecules. CA also has nucleocapsid-like chaperone activity, promoting primer tRNA(i)-Met annealing to the multipartite primer-binding site (PBS), dimerization of Ty2 RNA and initiation of reverse transcription. The aspartyl protease (PR) mediates the proteolytic cleavages of the Gag and Gag-Pol polyproteins after assembly of the VLP. Its function is as follows. Reverse transcriptase/ribonuclease H (RT) is a multifunctional enzyme that catalyzes the conversion of the retro-elements RNA genome into dsDNA within the VLP. The enzyme displays a DNA polymerase activity that can copy either DNA or RNA templates, and a ribonuclease H (RNase H) activity that cleaves the RNA strand of RNA-DNA heteroduplexes during plus-strand synthesis and hydrolyzes RNA primers. The conversion leads to a linear dsDNA copy of the retrotransposon that includes long terminal repeats (LTRs) at both ends. In terms of biological role, integrase (IN) targets the VLP to the nucleus, where a subparticle preintegration complex (PIC) containing at least integrase and the newly synthesized dsDNA copy of the retrotransposon must transit the nuclear membrane. Once in the nucleus, integrase performs the integration of the dsDNA into the host genome. The sequence is that of Transposon Ty2-F Gag-Pol polyprotein (TY2B-F) from Saccharomyces cerevisiae (strain ATCC 204508 / S288c) (Baker's yeast).